The sequence spans 22 residues: Cysteine-rich venom protein notescatin (22 aa).

A compositionally biased stretch (basic and acidic residues) spans 1 to 15 (SNKKDYQKEIVDKHN). The disordered stretch occupies residues 1–22 (SNKKDYQKEIVDKHNALRRSVK).

This sequence belongs to the CRISP family. Post-translationally, contains 8 disulfide bonds. As to expression, expressed by the venom gland.

It is found in the secreted. This Notechis scutatus scutatus (Mainland tiger snake) protein is Cysteine-rich venom protein notescatin.